The following is a 969-amino-acid chain: Leucine--tRNA ligase (969 aa).

A 'HIGH' region motif is present at residues 46–56 (PYLNGVLHAGH). Positions 658 to 662 (KLSKS) match the 'KMSKS' region motif. Residue Lys661 coordinates ATP.

Belongs to the class-I aminoacyl-tRNA synthetase family.

It is found in the cytoplasm. The catalysed reaction is tRNA(Leu) + L-leucine + ATP = L-leucyl-tRNA(Leu) + AMP + diphosphate. This is Leucine--tRNA ligase from Methanococcus aeolicus (strain ATCC BAA-1280 / DSM 17508 / OCM 812 / Nankai-3).